A 257-amino-acid chain; its full sequence is 5'-nucleotidase SurE (257 aa).

Positions 8, 9, 40, and 92 each coordinate a divalent metal cation.

The protein belongs to the SurE nucleotidase family. Requires a divalent metal cation as cofactor.

It is found in the cytoplasm. The catalysed reaction is a ribonucleoside 5'-phosphate + H2O = a ribonucleoside + phosphate. Functionally, nucleotidase that shows phosphatase activity on nucleoside 5'-monophosphates. The sequence is that of 5'-nucleotidase SurE from Rhizobium etli (strain ATCC 51251 / DSM 11541 / JCM 21823 / NBRC 15573 / CFN 42).